The sequence spans 238 residues: Small ribosomal subunit protein eS4 (238 aa).

Residues 38-101 (LPLALIIRDV…GEVYRVVPDA (64 aa)) enclose the S4 RNA-binding domain.

The protein belongs to the eukaryotic ribosomal protein eS4 family.

The protein is Small ribosomal subunit protein eS4 of Pyrobaculum aerophilum (strain ATCC 51768 / DSM 7523 / JCM 9630 / CIP 104966 / NBRC 100827 / IM2).